A 440-amino-acid chain; its full sequence is Transposon Ty1-DR3 Gag polyprotein (440 aa).

Composition is skewed to polar residues over residues 1–10, 48–60, and 127–152; these read MESQQLSNYP, TKANSQQTTTPAS, and QSQFPQYPSSVGTPLSTPSPESGNTF. Disordered regions lie at residues 1 to 93, 126 to 173, and 352 to 440; these read MESQ…MMTQ, PQSQ…RPPP, and GSRN…PETY. Residues 153 to 165 show a composition bias toward low complexity; it reads TDSSSADSDMTST. The interval 299–401 is RNA-binding; it reads NNGIHINNKV…NSKSKTARAH (103 aa). Over residues 402–428 the composition is skewed to polar residues; that stretch reads NVSTSINSPSTDNDSISKSTTEPIQLN. Ser416 is subject to Phosphoserine. Over residues 429–440 the composition is skewed to basic and acidic residues; it reads NKHDLHLRPETY.

Homotrimer.

The protein resides in the cytoplasm. Its function is as follows. Capsid protein (CA) is the structural component of the virus-like particle (VLP), forming the shell that encapsulates the retrotransposons dimeric RNA genome. The particles are assembled from trimer-clustered units and there are holes in the capsid shells that allow for the diffusion of macromolecules. CA also has nucleocapsid-like chaperone activity, promoting primer tRNA(i)-Met annealing to the multipartite primer-binding site (PBS), dimerization of Ty1 RNA and initiation of reverse transcription. This is Transposon Ty1-DR3 Gag polyprotein (TY1A-DR3) from Saccharomyces cerevisiae (strain ATCC 204508 / S288c) (Baker's yeast).